The following is a 653-amino-acid chain: MKRICGSLLLLGLSISAALAAPASRPAAFDYANLSSVDKVALRTMPAVDVAKAKAEDLQRDKRGDIPRFALAIDVDMTPQNSGAWEYTADGQFAVWRQRVRSEKALSLNFGFTDYYMPAGGRLLVYPATQAPAGDRGLISQYDASNNNSARQLWTAVVPGAEAVIEAVIPRDKVGEFKLRLTKVNHDYVGFGPLARRLAAASGEKGVSGSCNIDVVCPEGDGRRDIIRAVGAYSKSGTLACTGSLVNNTANDRKMYFLTAHHCGMGTASTAASIVVYWNYQNSTCRAPNTPASGANGDGSMSQTQSGSTVKATYATSDFTLLELNNAANPAFNLFWAGWDRRDQNYPGAIAIHHPNVAEKRISNSTSPTSFVAWGGGAGTTHLNVQWQPSGGVTEPGSSGSPIYSPEKRVLGQLHGGPSSCSATGTNRSDQYGRVFTSWTGGGAAASRLSDWLDPASTGAQFIDGLDSGGGTPNTPPVANFTSTTSGLTATFTDSSTDSDGSIASRSWNFGDGSTSTATNPSKTYAAAGTYTVTLTVTDNGGATNTKTGSVTVSGGPGAQTYTNDTDVAIPDNATVESPITVSGRTGNGSATTPIQVTIYHTYKSDLKVDLVAPDGTVYNLHNRTGGSAHNIIQTFTKDLSSEAAQRAPGSCG.

A signal peptide (or 27) is located at residues 1-20 (MKRICGSLLLLGLSISAALA). Positions 21–205 (APASRPAAFD…RRLAAASGEK (185 aa)) are excised as a propeptide. 3 cysteine pairs are disulfide-bonded: C211–C421, C217–C285, and C241–C263. Active-site charge relay system residues include H262, D318, and S399. The region spanning 474–553 (NTPPVANFTS…TNTKTGSVTV (80 aa)) is the PKD domain. Positions 474–653 (NTPPVANFTS…AAQRAPGSCG (180 aa)) are cleaved as a propeptide — thr/Ser-rich. A P/Homo B domain is found at 555-653 (GGPGAQTYTN…AAQRAPGSCG (99 aa)).

Belongs to the peptidase S1 family. Post-translationally, three disulfide bonds are present.

Its subcellular location is the secreted. It catalyses the reaction Preferential cleavage: Lys-|-Xaa, including Lys-|-Pro.. The polypeptide is Protease 1 (Achromobacter lyticus).